The sequence spans 292 residues: Histamine N-methyltransferase (292 aa).

Position 28 (Glu28) interacts with substrate. S-adenosyl-L-methionine is bound by residues Gly60, Glu89, Gln94, Ser120, and Ile142. Asn283 is a binding site for substrate.

The protein belongs to the class I-like SAM-binding methyltransferase superfamily. HNMT family. Monomer.

The protein localises to the cytoplasm. It carries out the reaction histamine + S-adenosyl-L-methionine = N(tau)-methylhistamine + S-adenosyl-L-homocysteine + H(+). In terms of biological role, inactivates histamine by N-methylation. Plays an important role in degrading histamine and in regulating the airway response to histamine. The sequence is that of Histamine N-methyltransferase (HNMT) from Pongo abelii (Sumatran orangutan).